The sequence spans 271 residues: Co-chaperone protein DjlA (271 aa).

Over M1–K6 the chain is Periplasmic. A helical membrane pass occupies residues I7–H31. The Cytoplasmic portion of the chain corresponds to M32–K271. The 67-residue stretch at D205–K271 folds into the J domain.

Homodimer.

Its subcellular location is the cell inner membrane. In terms of biological role, regulatory DnaK co-chaperone. Direct interaction between DnaK and DjlA is needed for the induction of the wcaABCDE operon, involved in the synthesis of a colanic acid polysaccharide capsule, possibly through activation of the RcsB/RcsC phosphotransfer signaling pathway. The colanic acid capsule may help the bacterium survive conditions outside the host. This chain is Co-chaperone protein DjlA, found in Escherichia coli O157:H7.